Reading from the N-terminus, the 69-residue chain is Cytochrome c oxidase subunit 8A, mitochondrial (69 aa).

The N-terminal 25 residues, 1-25 (MSSLTPLLLRSLTGPARRLMVPRAQ), are a transit peptide targeting the mitochondrion. The SIFI-degron signature appears at 2-19 (SSLTPLLLRSLTGPARRL). At 26–36 (VHSKPPREQLG) the chain is on the mitochondrial matrix side. Residues 37 to 60 (VLDITIGLTSCFVCCLLPAGWVLS) traverse the membrane as a helical segment. Residues 61-69 (HLESYKKRE) are Mitochondrial intermembrane-facing.

Belongs to the cytochrome c oxidase VIII family. In terms of assembly, component of the cytochrome c oxidase (complex IV, CIV), a multisubunit enzyme composed of 14 subunits. The complex is composed of a catalytic core of 3 subunits MT-CO1, MT-CO2 and MT-CO3, encoded in the mitochondrial DNA, and 11 supernumerary subunits COX4I, COX5A, COX5B, COX6A, COX6B, COX6C, COX7A, COX7B, COX7C, COX8 and NDUFA4, which are encoded in the nuclear genome. The complex exists as a monomer or a dimer and forms supercomplexes (SCs) in the inner mitochondrial membrane with NADH-ubiquinone oxidoreductase (complex I, CI) and ubiquinol-cytochrome c oxidoreductase (cytochrome b-c1 complex, complex III, CIII), resulting in different assemblies (supercomplex SCI(1)III(2)IV(1) and megacomplex MCI(2)III(2)IV(2)). In response to mitochondrial stress, the precursor protein is ubiquitinated by the SIFI complex in the cytoplasm before mitochondrial import, leading to its degradation. Within the SIFI complex, UBR4 initiates ubiquitin chain that are further elongated or branched by KCMF1.

It localises to the mitochondrion inner membrane. Its pathway is energy metabolism; oxidative phosphorylation. In terms of biological role, component of the cytochrome c oxidase, the last enzyme in the mitochondrial electron transport chain which drives oxidative phosphorylation. The respiratory chain contains 3 multisubunit complexes succinate dehydrogenase (complex II, CII), ubiquinol-cytochrome c oxidoreductase (cytochrome b-c1 complex, complex III, CIII) and cytochrome c oxidase (complex IV, CIV), that cooperate to transfer electrons derived from NADH and succinate to molecular oxygen, creating an electrochemical gradient over the inner membrane that drives transmembrane transport and the ATP synthase. Cytochrome c oxidase is the component of the respiratory chain that catalyzes the reduction of oxygen to water. Electrons originating from reduced cytochrome c in the intermembrane space (IMS) are transferred via the dinuclear copper A center (CU(A)) of subunit 2 and heme A of subunit 1 to the active site in subunit 1, a binuclear center (BNC) formed by heme A3 and copper B (CU(B)). The BNC reduces molecular oxygen to 2 water molecules using 4 electrons from cytochrome c in the IMS and 4 protons from the mitochondrial matrix. This chain is Cytochrome c oxidase subunit 8A, mitochondrial (Cox8a), found in Rattus norvegicus (Rat).